The sequence spans 138 residues: ATP synthase epsilon chain (138 aa).

It belongs to the ATPase epsilon chain family. As to quaternary structure, F-type ATPases have 2 components, CF(1) - the catalytic core - and CF(0) - the membrane proton channel. CF(1) has five subunits: alpha(3), beta(3), gamma(1), delta(1), epsilon(1). CF(0) has three main subunits: a, b and c.

Its subcellular location is the cell inner membrane. In terms of biological role, produces ATP from ADP in the presence of a proton gradient across the membrane. This chain is ATP synthase epsilon chain, found in Methylibium petroleiphilum (strain ATCC BAA-1232 / LMG 22953 / PM1).